The following is a 148-amino-acid chain: Deoxyuridine 5'-triphosphate nucleotidohydrolase (148 aa).

Substrate-binding positions include 68–70 (RSG), Asn-81, and 85–87 (TID).

This sequence belongs to the dUTPase family. Mg(2+) is required as a cofactor.

The enzyme catalyses dUTP + H2O = dUMP + diphosphate + H(+). Its pathway is pyrimidine metabolism; dUMP biosynthesis; dUMP from dCTP (dUTP route): step 2/2. Functionally, this enzyme is involved in nucleotide metabolism: it produces dUMP, the immediate precursor of thymidine nucleotides and it decreases the intracellular concentration of dUTP so that uracil cannot be incorporated into DNA. The sequence is that of Deoxyuridine 5'-triphosphate nucleotidohydrolase from Geobacter metallireducens (strain ATCC 53774 / DSM 7210 / GS-15).